The sequence spans 517 residues: Cytochrome P450 monooxygenase polD (517 aa).

Residues 5–27 traverse the membrane as a helical segment; it reads VVLVGIVVLVLAYLSSTGKVYPH. Heme is bound at residue Cys-435.

It belongs to the cytochrome P450 family. Requires heme as cofactor.

The protein localises to the membrane. In terms of biological role, cytochrome P450 monooxygenase; part of the gene cluster that mediates the biosynthesis of antifungal fernane-type triterpenoid polytolypin. PolD doe not seem to be involved in the biosynthesis of polytolypin. Within the pathway, the triterpene cyclase polA first catalyzes the cyclization of 2,3-oxidosqualene to motiol, polc converts the 4-alpha-methyl group of motiol to a carboxyl group, polB is responsible for appending a hydroxyl group at the 2-alpha position and polE is a dual functional P450, which can catalyze the formation of both the 1-beta-hydroxyl group and 10-beta-carboxyl group. In Polytolypa hystricis (strain UAMH7299), this protein is Cytochrome P450 monooxygenase polD.